Here is a 376-residue protein sequence, read N- to C-terminus: Zinc transporter 7 (376 aa).

At 1-37 (MLPLSIKDDEYKPPKFNLFRKISGWFRSILSDKTSRN) the chain is on the cytoplasmic side. Residues 38 to 58 (LFFFLCLNLSFAFVELLYGIW) traverse the membrane as a helical segment. Residues 59–67 (SNCLGLISD) lie on the Lumenal side of the membrane. A helical transmembrane segment spans residues 68 to 88 (SFHMFFDSTAILAGLAASVIS). At 89–102 (KWRDNDAFSYGYVR) the chain is on the cytoplasmic side. A helical membrane pass occupies residues 103-123 (AEVLAGFVNGLFLIFTAFFIF). The Lumenal segment spans residues 124 to 140 (SEGVERALAPPDVHHER). Residues 141–161 (LLLVSILGFVVNLVGIFVFKH) traverse the membrane as a helical segment. Residues 161 to 218 (HGGHGHSHGSGHGHSHSLFNGALDQTHGHGDHCHSHELKHGAAHSHDHAHGHGHFHSH) are his-rich loop. Residues 162 to 236 (GGHGHSHGSG…TGPSRQILQG (75 aa)) lie on the Cytoplasmic side of the membrane. Over residues 188-222 (GHGDHCHSHELKHGAAHSHDHAHGHGHFHSHDGPS) the composition is skewed to basic and acidic residues. A disordered region spans residues 188-226 (GHGDHCHSHELKHGAAHSHDHAHGHGHFHSHDGPSLKET). A helical transmembrane segment spans residues 237-257 (VFLHILADTLGSIGVIASAIM). Residues 258 to 262 (MQNFG) are Lumenal-facing. The chain crosses the membrane as a helical span at residues 263–283 (LMIADPICSILIAMLIVISVI). Residues 284-376 (PLLRESVGIL…LYVQIDFAAM (93 aa)) are Cytoplasmic-facing.

It belongs to the cation diffusion facilitator (CDF) transporter (TC 2.A.4) family. SLC30A subfamily. In terms of assembly, homooligomer.

The protein resides in the golgi apparatus membrane. Its subcellular location is the cytoplasmic vesicle. The protein localises to the golgi apparatus. It is found in the trans-Golgi network. It localises to the sarcoplasmic reticulum. The protein resides in the mitochondrion. The catalysed reaction is Zn(2+)(in) = Zn(2+)(out). Functionally, zinc ion transporter mediating zinc entry from the cytosol into the lumen of organelles along the secretory pathway. By contributing to zinc ion homeostasis within the early secretory pathway, regulates the activation and folding of enzymes like alkaline phosphatases. The chain is Zinc transporter 7 (SLC30A7) from Bos taurus (Bovine).